A 485-amino-acid polypeptide reads, in one-letter code: MAEEAILGFLQNNEQITDSGQFSAEFNIDHNELVNVIKSLHGFRYIDVQDIKKETWILTDEGKKYAAEGSPEVQLFLAVPEEGSISKDELQKKLAPAVFKIGCSQAGKNKWVEMGKQVSRKVKDVEDKVKGQLLQIQQGKEFDKESINSLKARKLIVPQIWKGYSVKKGPNYAPERKKVATDLTRENLQNWKELEFKEYNFKAKGAPVDAGHLHALLKVRKQFKDIFVQMGFEEMPTNNYVESSFWNFDALFQPQQHPARDSHDTFFLKVPSTTRTLPEDYVERVKRVHESGGYGSRGYNYDWKREEANKNLLRTHTTAVSSRMLYALAQKPFVPKKYFSIDRVFRNEAVDRTHLAEFHQIEGLICDRGLTLGDLIGVLEDFFSRLGMSKLRFKPAYNPYTEPSMEIFSYHEGLGKWVEIGNSGMFRPEMLLPMGLPEDVRVIAWGLSLERPTMILYGIDNIRDLFGHKVDLDLIKRNPICRIGI.

L-phenylalanine is bound by residues Thr318, 360–362 (QIE), and Tyr400. Residue Glu402 coordinates Mg(2+). Phe426 contributes to the L-phenylalanine binding site.

This sequence belongs to the class-II aminoacyl-tRNA synthetase family. Phe-tRNA synthetase alpha subunit type 2 subfamily. Tetramer of two alpha and two beta subunits. The cofactor is Mg(2+).

The protein resides in the cytoplasm. It is found in the cytosol. The catalysed reaction is tRNA(Phe) + L-phenylalanine + ATP = L-phenylalanyl-tRNA(Phe) + AMP + diphosphate + H(+). This chain is Phenylalanine--tRNA ligase alpha subunit, cytoplasmic, found in Arabidopsis thaliana (Mouse-ear cress).